Reading from the N-terminus, the 581-residue chain is NADH-quinone oxidoreductase subunit C/D (581 aa).

Residues 1–172 (MSASELVTEL…PLFNMTASLF (172 aa)) are NADH dehydrogenase I subunit C. Residues 196-581 (ELMILNYGPH…IDYVMSDVDR (386 aa)) form an NADH dehydrogenase I subunit D region.

In the N-terminal section; belongs to the complex I 30 kDa subunit family. The protein in the C-terminal section; belongs to the complex I 49 kDa subunit family. NDH-1 is composed of 13 different subunits. Subunits NuoB, CD, E, F, and G constitute the peripheral sector of the complex.

Its subcellular location is the cell inner membrane. The enzyme catalyses a quinone + NADH + 5 H(+)(in) = a quinol + NAD(+) + 4 H(+)(out). Its function is as follows. NDH-1 shuttles electrons from NADH, via FMN and iron-sulfur (Fe-S) centers, to quinones in the respiratory chain. The immediate electron acceptor for the enzyme in this species is believed to be ubiquinone. Couples the redox reaction to proton translocation (for every two electrons transferred, four hydrogen ions are translocated across the cytoplasmic membrane), and thus conserves the redox energy in a proton gradient. The sequence is that of NADH-quinone oxidoreductase subunit C/D from Rhodopseudomonas palustris (strain TIE-1).